The sequence spans 297 residues: Acetylglutamate kinase (297 aa).

Residues 70–71 (GG), Arg92, and Asn194 each bind substrate.

Belongs to the acetylglutamate kinase family. ArgB subfamily.

It localises to the cytoplasm. It carries out the reaction N-acetyl-L-glutamate + ATP = N-acetyl-L-glutamyl 5-phosphate + ADP. The protein operates within amino-acid biosynthesis; L-arginine biosynthesis; N(2)-acetyl-L-ornithine from L-glutamate: step 2/4. In terms of biological role, catalyzes the ATP-dependent phosphorylation of N-acetyl-L-glutamate. In Janthinobacterium sp. (strain Marseille) (Minibacterium massiliensis), this protein is Acetylglutamate kinase.